The primary structure comprises 919 residues: Glutamate receptor ionotropic, kainate 3 (919 aa).

The signal sequence occupies residues 1 to 31; it reads MTAPWRRLRSLVWEYWAGLLVCAFWIPDSRG. The Extracellular portion of the chain corresponds to 32–563; that stretch reads MPHVIRIGGI…VFSFLNPLSP (532 aa). Residues N70, N76, N278, N381, N415, N426, and N433 are each glycosylated (N-linked (GlcNAc...) asparagine). Residues C99 and C350 are joined by a disulfide bond. P518, T520, and R525 together coordinate L-glutamate. N-linked (GlcNAc...) asparagine glycosylation is found at N548 and N551. The helical transmembrane segment at 564-584 threads the bilayer; sequence DIWMYVLLAYLGVSCVLFVIA. Residues 585–636 are Cytoplasmic-facing; sequence RFSPYEWYDAHPCNPGSEVVENNFTLLNSFWFGMGSLMQQGSELMPKALSTR. A helical membrane pass occupies residues 637 to 657; sequence IIGGIWWFFTLIIISSYTANL. At 658–820 the chain is on the extracellular side; the sequence is AAFLTVERME…KEASALGIQK (163 aa). Positions 691, 692, and 739 each coordinate L-glutamate. N752 carries an N-linked (GlcNAc...) asparagine glycan. A helical transmembrane segment spans residues 821 to 841; that stretch reads IGGIFIVLAAGLVLSVLVAVG. Topologically, residues 842-919 are cytoplasmic; it reads EFVYKLRKTA…CSTSLAPVFP (78 aa). S869 is subject to Phosphoserine. Residue K887 forms a Glycyl lysine isopeptide (Lys-Gly) (interchain with G-Cter in SUMO1) linkage.

Belongs to the glutamate-gated ion channel (TC 1.A.10.1) family. GRIK3 subfamily. Homotetramer, and heterotetramer with either GRIK4 or GRIK5. Can form functional heteromeric receptors with GRIK2. Interacts with PRKCABP. Interacts with NETO2.

The protein localises to the cell membrane. Its subcellular location is the postsynaptic cell membrane. It catalyses the reaction Ca(2+)(in) = Ca(2+)(out). In terms of biological role, ionotropic glutamate receptor that functions as a cation-permeable ligand-gated ion channel, gated by L-glutamate and the glutamatergic agonist kainic acid. Binding of the excitatory neurotransmitter L-glutamate induces a conformation change, leading to the opening of the cation channel, and thereby converts the chemical signal to an electrical impulse. The receptor then desensitizes rapidly and enters a transient inactive state, characterized by the presence of bound agonist. In association with GRIK2, involved in presynaptic facilitation of glutamate release at hippocampal mossy fiber synapses. The chain is Glutamate receptor ionotropic, kainate 3 (GRIK3) from Macaca fascicularis (Crab-eating macaque).